The primary structure comprises 620 residues: DNA mismatch repair protein MutL (620 aa).

Residues 353 to 375 are disordered; that stretch reads SRANGANDFTGRPFSGTERPRGG.

Belongs to the DNA mismatch repair MutL/HexB family.

This protein is involved in the repair of mismatches in DNA. It is required for dam-dependent methyl-directed DNA mismatch repair. May act as a 'molecular matchmaker', a protein that promotes the formation of a stable complex between two or more DNA-binding proteins in an ATP-dependent manner without itself being part of a final effector complex. The chain is DNA mismatch repair protein MutL from Chelativorans sp. (strain BNC1).